The sequence spans 391 residues: MSIVRMTDLDLSGKRVLIRQDLNVPIDNGQITSEQRITASVPTIKLALEKGAAVMVTSHLGRPKEGSWTEEDSLAPVATRLAALLGVDVPLVRDWVDGVEVAPGQVVLLENCRMNVGEGKDDQTLARKYAALCDVFVMDAFGTAHRAQASTHGVIRFAPVAAGGPLLMAELDALAKALDNPAKPLLAIVAGSKVSTKLELLSNLVNKVDQLIVGGGIANTFIAAAGHHVGKSLNEPDLIPTANQIVADAKTRGAEIPLPTDVVVAKQFLPDAEASVKALDAVDADDLILDIGPQTAQRYAELIASAGTVVWNGPVGVFEFESFSHGTETLARAIASSKAFSIAGGGDTLAAVDKYDIAKDVTYISTGGGAFLEFLEGKTLPAVAALQARGQ.

Residues 21-23, arginine 36, 59-62, arginine 113, and arginine 146 contribute to the substrate site; these read DLN and HLGR. Residues lysine 197, glutamate 319, and 345–348 contribute to the ATP site; that span reads GGDT.

Belongs to the phosphoglycerate kinase family. Monomer.

It is found in the cytoplasm. The catalysed reaction is (2R)-3-phosphoglycerate + ATP = (2R)-3-phospho-glyceroyl phosphate + ADP. It functions in the pathway carbohydrate degradation; glycolysis; pyruvate from D-glyceraldehyde 3-phosphate: step 2/5. This Xanthomonas oryzae pv. oryzae (strain MAFF 311018) protein is Phosphoglycerate kinase.